The chain runs to 272 residues: NH(3)-dependent NAD(+) synthetase (272 aa).

Residue 45 to 52 coordinates ATP; the sequence is GISGGQDS. D51 is a binding site for Mg(2+). R138 contacts deamido-NAD(+). An ATP-binding site is contributed by T158. E163 is a binding site for Mg(2+). Residues K171 and D178 each contribute to the deamido-NAD(+) site. ATP-binding residues include K187 and T209. 258 to 259 serves as a coordination point for deamido-NAD(+); the sequence is HK.

The protein belongs to the NAD synthetase family. Homodimer.

The catalysed reaction is deamido-NAD(+) + NH4(+) + ATP = AMP + diphosphate + NAD(+) + H(+). The protein operates within cofactor biosynthesis; NAD(+) biosynthesis; NAD(+) from deamido-NAD(+) (ammonia route): step 1/1. Its function is as follows. Catalyzes the ATP-dependent amidation of deamido-NAD to form NAD. Uses ammonia as a nitrogen source. The chain is NH(3)-dependent NAD(+) synthetase from Bacillus cereus (strain Q1).